The following is a 475-amino-acid chain: Glycogen synthase (475 aa).

Position 15 (Lys15) interacts with ADP-alpha-D-glucose.

Belongs to the glycosyltransferase 1 family. Bacterial/plant glycogen synthase subfamily.

It catalyses the reaction [(1-&gt;4)-alpha-D-glucosyl](n) + ADP-alpha-D-glucose = [(1-&gt;4)-alpha-D-glucosyl](n+1) + ADP + H(+). The protein operates within glycan biosynthesis; glycogen biosynthesis. Its function is as follows. Synthesizes alpha-1,4-glucan chains using ADP-glucose. In Alkaliphilus metalliredigens (strain QYMF), this protein is Glycogen synthase.